Reading from the N-terminus, the 1049-residue chain is Dyslexia-associated protein KIAA0319-like protein (1049 aa).

The Cytoplasmic portion of the chain corresponds to 1 to 29 (MEKRLGVKPNPASWILSGYYWQTSAKWLR). A helical transmembrane segment spans residues 30–50 (SLYLFYTCFCFSVLWLSTDAS). The 79-residue stretch at 49–127 (ASESRCQQGK…AFRTHSSNSM (79 aa)) folds into the MANSC domain. At 51-932 (ESRCQQGKTQ…DSNCEWSVLY (882 aa)) the chain is on the extracellular side. N-linked (GlcNAc...) asparagine glycosylation is found at N247, N395, N472, N487, and N525. PKD domains are found at residues 312–401 (SAGE…VKPE), 409–498 (IAIV…VNKA), 504–594 (VANA…VQPE), 600–688 (QADA…VKEE), and 694–785 (IAKI…VKPD). The chain crosses the membrane as a helical span at residues 933 to 953 (VIIATFVIVVALGILSWTVIC). At 954–1049 (CCKRQKGKPK…KARSPREEIL (96 aa)) the chain is on the cytoplasmic side. Position 974 is a phosphothreonine (T974). A phosphoserine mark is found at S978, S1009, and S1031. Positions 1022–1049 (GKLLHGQNGSVPNGQTPLKARSPREEIL) are disordered. Positions 1028–1037 (QNGSVPNGQT) are enriched in polar residues. T1037 carries the post-translational modification Phosphothreonine.

In terms of assembly, interacts with RTN4R. (Microbial infection) Interacts with AAV-2 VP1. Post-translationally, N-glycosylated. Expressed in cortical neurons in the brain cortex (at protein level).

Its subcellular location is the cytoplasmic granule membrane. It localises to the golgi apparatus membrane. The protein localises to the golgi apparatus. The protein resides in the trans-Golgi network membrane. It is found in the cell membrane. Functionally, possible role in axon guidance through interaction with RTN4R. In terms of biological role, (Microbial infection) Acts as a receptor for adeno-associated virus and is involved in adeno-associated virus infection through endocytosis system. The protein is Dyslexia-associated protein KIAA0319-like protein of Homo sapiens (Human).